A 672-amino-acid polypeptide reads, in one-letter code: APC membrane recruitment protein 2 (672 aa).

The span at 1 to 21 (METGRSRGGGAAVSERGGGAR) shows a compositional bias: gly residues. Disordered stretches follow at residues 1–23 (METGRSRGGGAAVSERGGGARAG), 74–360 (TMPS…DPSA), and 443–560 (MLSQ…DALC). Positions 142–158 (GSLASSSVAKSHSFFSL) are enriched in low complexity. At Ser-154 the chain carries Phosphoserine. Composition is skewed to basic and acidic residues over residues 163–175 (GRSETGKGDHAEA) and 201–210 (RGKEEEEKAV). Phosphoserine is present on residues Ser-223, Ser-227, and Ser-244. Positions 230–254 (CVKEEPPRAARRPDSPGQDASRHAA) are enriched in basic and acidic residues. The span at 255 to 269 (GEPAGGEQAPASAES) shows a compositional bias: low complexity. Ser-284 bears the Phosphoserine mark. The segment covering 289–303 (SRGEDAEGHRREEKP) has biased composition (basic and acidic residues). Residues 343–354 (ASAVPDPSSVDP) show a composition bias toward low complexity. Phosphoserine is present on residues Ser-356 and Ser-359. The span at 446 to 457 (QTEDQGQGTQEG) shows a compositional bias: low complexity. Composition is skewed to basic and acidic residues over residues 478–488 (RCGEAAKDMSS) and 502–516 (QQKEEPKHPEKEHQE).

It belongs to the Amer family. In terms of assembly, interacts with APC.

It is found in the cell membrane. Its function is as follows. Negative regulator of the canonical Wnt signaling pathway involved in neuroectodermal patterning. Acts by specifically binding phosphatidylinositol 4,5-bisphosphate (PtdIns(4,5)P2), translocating to the cell membrane and interacting with key regulators of the canonical Wnt signaling pathway, such as components of the beta-catenin destruction complex. This Mus musculus (Mouse) protein is APC membrane recruitment protein 2 (Amer2).